The sequence spans 371 residues: Aminomethyltransferase (371 aa).

It belongs to the GcvT family. As to quaternary structure, the glycine cleavage system is composed of four proteins: P, T, L and H.

It carries out the reaction N(6)-[(R)-S(8)-aminomethyldihydrolipoyl]-L-lysyl-[protein] + (6S)-5,6,7,8-tetrahydrofolate = N(6)-[(R)-dihydrolipoyl]-L-lysyl-[protein] + (6R)-5,10-methylene-5,6,7,8-tetrahydrofolate + NH4(+). Its function is as follows. The glycine cleavage system catalyzes the degradation of glycine. The protein is Aminomethyltransferase of Leptospira borgpetersenii serovar Hardjo-bovis (strain JB197).